A 293-amino-acid chain; its full sequence is Proline iminopeptidase (293 aa).

Serine 105 acts as the Nucleophile in catalysis. Residue aspartate 244 is part of the active site. Residue histidine 271 is the Proton donor of the active site.

This sequence belongs to the peptidase S33 family. Part of the tricorn proteolytic complex.

It catalyses the reaction Release of N-terminal proline from a peptide.. Its function is as follows. Cleaves H-Pro-AMC as well as a wide spectrum of amino acid substrates and several peptide substrates without a proline at the N-terminus. Proteases F1, F2 and F3 degrade oligopeptides produced by Tricorn (themselves probably produced by the proteasome) yielding free amino acids. This chain is Proline iminopeptidase (pip), found in Thermoplasma acidophilum (strain ATCC 25905 / DSM 1728 / JCM 9062 / NBRC 15155 / AMRC-C165).